The chain runs to 274 residues: NH(3)-dependent NAD(+) synthetase (274 aa).

Gly-46–Ser-53 is an ATP binding site. Asp-52 contributes to the Mg(2+) binding site. Deamido-NAD(+) is bound at residue Arg-140. ATP is bound at residue Thr-160. Residue Glu-165 participates in Mg(2+) binding. Deamido-NAD(+) is bound by residues Lys-173 and Asp-180. ATP contacts are provided by Lys-189 and Thr-211. His-260 to Lys-261 lines the deamido-NAD(+) pocket.

Belongs to the NAD synthetase family. As to quaternary structure, homodimer.

The catalysed reaction is deamido-NAD(+) + NH4(+) + ATP = AMP + diphosphate + NAD(+) + H(+). The protein operates within cofactor biosynthesis; NAD(+) biosynthesis; NAD(+) from deamido-NAD(+) (ammonia route): step 1/1. Functionally, catalyzes the ATP-dependent amidation of deamido-NAD to form NAD. Uses ammonia as a nitrogen source. The sequence is that of NH(3)-dependent NAD(+) synthetase from Nocardia farcinica (strain IFM 10152).